A 364-amino-acid polypeptide reads, in one-letter code: MTDILNLTYEELEAFMTAELGEPRFRARQVWQWLWQKCARSFDEMTNVSKATRARLAEKAVITWPEVETVQKSADGTTKFLLRLADGALVETVLIPSASREGTLRITQCLSCQVGCAMGCTFCSTGTMGFERNMTMGEILGQVLVARAHLGDSRPDHPILRNLVFMGMGEPLLNLNEVMRSLRTLNDEFGLSFSPRRITVSTCGIEKGLRELGESGLAFLAVSLHAPNQEIRKRIMPKAAHWHLDDLITALESYPLKTRERVTFEYLLLGGVNDGIEHARELVRLVSRTKGKLNLIVYNPAEGDPYDAPTPERILAFEQYLWSKNITAIIRKSKGQDIKAACGQLKASELQRGTASAGADAPEA.

The active-site Proton acceptor is E91. The Radical SAM core domain maps to 102 to 337 (GTLRITQCLS…AIIRKSKGQD (236 aa)). C109 and C342 are joined by a disulfide. [4Fe-4S] cluster-binding residues include C116, C120, and C123. Residues 169 to 170 (GE), S201, 223 to 225 (SLH), and N299 contribute to the S-adenosyl-L-methionine site. C342 acts as the S-methylcysteine intermediate in catalysis.

This sequence belongs to the radical SAM superfamily. RlmN family. Requires [4Fe-4S] cluster as cofactor.

The protein localises to the cytoplasm. It catalyses the reaction adenosine(2503) in 23S rRNA + 2 reduced [2Fe-2S]-[ferredoxin] + 2 S-adenosyl-L-methionine = 2-methyladenosine(2503) in 23S rRNA + 5'-deoxyadenosine + L-methionine + 2 oxidized [2Fe-2S]-[ferredoxin] + S-adenosyl-L-homocysteine. The enzyme catalyses adenosine(37) in tRNA + 2 reduced [2Fe-2S]-[ferredoxin] + 2 S-adenosyl-L-methionine = 2-methyladenosine(37) in tRNA + 5'-deoxyadenosine + L-methionine + 2 oxidized [2Fe-2S]-[ferredoxin] + S-adenosyl-L-homocysteine. Its function is as follows. Specifically methylates position 2 of adenine 2503 in 23S rRNA and position 2 of adenine 37 in tRNAs. m2A2503 modification seems to play a crucial role in the proofreading step occurring at the peptidyl transferase center and thus would serve to optimize ribosomal fidelity. This is Dual-specificity RNA methyltransferase RlmN from Nitratidesulfovibrio vulgaris (strain ATCC 29579 / DSM 644 / CCUG 34227 / NCIMB 8303 / VKM B-1760 / Hildenborough) (Desulfovibrio vulgaris).